We begin with the raw amino-acid sequence, 366 residues long: Prostaglandin F2-alpha receptor (366 aa).

The Extracellular segment spans residues 1-31; it reads MSINSSKQPASSAAGLIANTTCQTENRLSVF. N-linked (GlcNAc...) asparagine glycans are attached at residues N4 and N19. A helical membrane pass occupies residues 32–55; the sequence is FSIIFMTVGIVSNSLAIAILMKAY. The Cytoplasmic segment spans residues 56–69; it reads QRFRRKSKASFLLL. The helical transmembrane segment at 70–90 threads the bilayer; it reads ASGLVITDFFGHLINGGIAVF. At 91 to 109 the chain is on the extracellular side; the sequence is VYASDKDWIRFDQSNILCS. C108 and C186 are joined by a disulfide. Residues 110-131 traverse the membrane as a helical segment; sequence VFGISMVFSGLCPLFLGSTMAI. The Cytoplasmic portion of the chain corresponds to 132–152; sequence ERCIGVTNPLFHSTKITSKHV. A helical membrane pass occupies residues 153-175; that stretch reads KMILSGVCMFAVFVALLPILGHR. The Extracellular portion of the chain corresponds to 176–198; that stretch reads DYQIQASRTWCFYNTEHIEDWED. The helical transmembrane segment at 199 to 224 threads the bilayer; sequence RFYLLFFSSLGLLALGISFSCNAVTG. At 225 to 250 the chain is on the cytoplasmic side; the sequence is VTLLRVKFRSQQHRQGRSHHLEMVIQ. Residues 251 to 267 traverse the membrane as a helical segment; sequence LLAIMCVSCVCWSPFLV. At 268–285 the chain is on the extracellular side; it reads TMANIAINGNNSPVTCET. The chain crosses the membrane as a helical span at residues 286–307; it reads TLFALRMATWNQILDPWVYILL. Residues 308 to 366 are Cytoplasmic-facing; sequence RKAVLRNLYKLASRCCGVNIISLHIWELSSIKNSLKVAAISESPAAEKENQQASSEAGL.

This sequence belongs to the G-protein coupled receptor 1 family. In terms of tissue distribution, highest expression in pregnant ovary. Also found in a low extent in the kidney. In the brain, expressed in astrocytes and oligodendrocytes, and meningeal fibroblasts, but not in migroglia cells.

The protein localises to the cell membrane. Functionally, receptor for prostaglandin F2-alpha (PGF2-alpha). The activity of this receptor is mediated by G proteins which activate a phosphatidylinositol-calcium second messenger system. Initiates luteolysis in the corpus luteum. In Rattus norvegicus (Rat), this protein is Prostaglandin F2-alpha receptor (Ptgfr).